Reading from the N-terminus, the 334-residue chain is Probable fructose-bisphosphate aldolase class 1 (334 aa).

It belongs to the class I fructose-bisphosphate aldolase family.

The catalysed reaction is beta-D-fructose 1,6-bisphosphate = D-glyceraldehyde 3-phosphate + dihydroxyacetone phosphate. It participates in carbohydrate degradation; glycolysis; D-glyceraldehyde 3-phosphate and glycerone phosphate from D-glucose: step 4/4. The protein is Probable fructose-bisphosphate aldolase class 1 of Xanthomonas campestris pv. campestris (strain ATCC 33913 / DSM 3586 / NCPPB 528 / LMG 568 / P 25).